Reading from the N-terminus, the 156-residue chain is Ribosome maturation factor RimP (156 aa).

Belongs to the RimP family.

It localises to the cytoplasm. Its function is as follows. Required for maturation of 30S ribosomal subunits. This is Ribosome maturation factor RimP from Synechococcus sp. (strain JA-2-3B'a(2-13)) (Cyanobacteria bacterium Yellowstone B-Prime).